Reading from the N-terminus, the 299-residue chain is HTH-type transcriptional regulator CrgA (299 aa).

One can recognise an HTH lysR-type domain in the interval 1 to 60 (MKTNSEELTVFVQVVESGSFSRAAEQLAMANSAVSRIVKRLEEKLGVNLLNRTTRQLSLT). Positions 20-39 (FSRAAEQLAMANSAVSRIVK) form a DNA-binding region, H-T-H motif.

This sequence belongs to the LysR transcriptional regulatory family. Forms oligomers. Oligomerization is required for DNA binding.

Functionally, involved in the regulation of bacterial adhesion to host epithelial cells. May play a central regulatory role in meningococcal adhesion, particularly in switching from initial adhesion to intimate adhesion by downregulating the bacterial surface structures that hinder this adhesion. During intimate adhesion, negatively regulates the expression of pilC1, encoding a pilus-associated protein, pilE, encoding the pilin, and sia genes, encoding the capsule. Also negatively regulates its own expression. May also regulate other genes that are involved in intimate adhesion. Binds specifically to the promoter region of pilC1 and crgA (both harboring a CREN element), and pilE and sia (both devoid of a CREN element). Acts through interaction with RNA polymerase (RNAP). Interaction with RNAP leads to the production of short abortive transcripts, suggesting that CrgA may act by preventing RNAP from clearing the promoter. In Neisseria meningitidis serogroup C (strain 8013), this protein is HTH-type transcriptional regulator CrgA.